The chain runs to 200 residues: dITP/XTP pyrophosphatase (200 aa).

19 to 24 provides a ligand contact to substrate; sequence TSNAGK. The Mg(2+) site is built by E49 and D78. D78 serves as the catalytic Proton acceptor. Substrate is bound by residues S79, 158 to 161, K181, and 186 to 187; these read FGYD and HR.

The protein belongs to the HAM1 NTPase family. Homodimer. The cofactor is Mg(2+).

It carries out the reaction XTP + H2O = XMP + diphosphate + H(+). The catalysed reaction is dITP + H2O = dIMP + diphosphate + H(+). It catalyses the reaction ITP + H2O = IMP + diphosphate + H(+). Functionally, pyrophosphatase that catalyzes the hydrolysis of nucleoside triphosphates to their monophosphate derivatives, with a high preference for the non-canonical purine nucleotides XTP (xanthosine triphosphate), dITP (deoxyinosine triphosphate) and ITP. Seems to function as a house-cleaning enzyme that removes non-canonical purine nucleotides from the nucleotide pool, thus preventing their incorporation into DNA/RNA and avoiding chromosomal lesions. The polypeptide is dITP/XTP pyrophosphatase (Deinococcus radiodurans (strain ATCC 13939 / DSM 20539 / JCM 16871 / CCUG 27074 / LMG 4051 / NBRC 15346 / NCIMB 9279 / VKM B-1422 / R1)).